The sequence spans 347 residues: Protein RecA (347 aa).

An ATP-binding site is contributed by 67–74 (GPESSGKT).

The protein belongs to the RecA family. In terms of processing, the protein migrates as a 40 kDa protein in strains 69A and NCTC 11637. When overexpressed in E.coli a 38 kDa protein is made which is unable to complement the E.coli deletion mutant. It has been suggested this size difference is due to a post-translational modification.

The protein resides in the cytoplasm. Its function is as follows. Can catalyze the hydrolysis of ATP in the presence of single-stranded DNA, the ATP-dependent uptake of single-stranded DNA by duplex DNA, and the ATP-dependent hybridization of homologous single-stranded DNAs. It interacts with LexA causing its activation and leading to its autocatalytic cleavage. Functionally, deletion of this gene leads to the inability of the bacteria to perform homologous recombination, and markedly increases UV sensitivity. This is Protein RecA from Helicobacter pylori (strain ATCC 700392 / 26695) (Campylobacter pylori).